Consider the following 89-residue polypeptide: Small ribosomal subunit protein uS17A (89 aa).

It belongs to the universal ribosomal protein uS17 family. Part of the 30S ribosomal subunit.

One of the primary rRNA binding proteins, it binds specifically to the 5'-end of 16S ribosomal RNA. The chain is Small ribosomal subunit protein uS17A from Bacteroides thetaiotaomicron (strain ATCC 29148 / DSM 2079 / JCM 5827 / CCUG 10774 / NCTC 10582 / VPI-5482 / E50).